The primary structure comprises 242 residues: Probable transcriptional regulatory protein Cphy_2507 (242 aa).

This sequence belongs to the TACO1 family.

The protein resides in the cytoplasm. The protein is Probable transcriptional regulatory protein Cphy_2507 of Lachnoclostridium phytofermentans (strain ATCC 700394 / DSM 18823 / ISDg) (Clostridium phytofermentans).